A 404-amino-acid polypeptide reads, in one-letter code: Immediate early response gene 5-like protein (404 aa).

Disordered stretches follow at residues 86 to 107 (AADF…EPAA), 160 to 231 (AALQ…APAS), and 308 to 327 (QEEE…EPPG). The segment covering 177–194 (PLQPGPAPLPLPLPPPAP) has biased composition (pro residues). Low complexity predominate over residues 195–231 (AALCPRDPRAPAACSAPPGAAPPAAAASPPASPAPAS). Residues 308 to 318 (QEEEEDDEEDA) are compositionally biased toward acidic residues.

Belongs to the IER family.

The polypeptide is Immediate early response gene 5-like protein (IER5L) (Homo sapiens (Human)).